A 219-amino-acid polypeptide reads, in one-letter code: Large ribosomal subunit protein uL4 (219 aa).

The interval 43–100 (AAKRQGTHSTKTRGEVSGGGKKPYRQKGTGRARQGSTRAPQFTGGGTVHGPQPRDYSQ) is disordered.

The protein belongs to the universal ribosomal protein uL4 family. In terms of assembly, part of the 50S ribosomal subunit.

In terms of biological role, one of the primary rRNA binding proteins, this protein initially binds near the 5'-end of the 23S rRNA. It is important during the early stages of 50S assembly. It makes multiple contacts with different domains of the 23S rRNA in the assembled 50S subunit and ribosome. Functionally, forms part of the polypeptide exit tunnel. The sequence is that of Large ribosomal subunit protein uL4 from Mycobacterium sp. (strain JLS).